Consider the following 525-residue polypeptide: GMP synthase [glutamine-hydrolyzing] (525 aa).

A Glutamine amidotransferase type-1 domain is found at 9 to 207 (RILILDFGSQ…VQDICGCEAL (199 aa)). Cys-86 acts as the Nucleophile in catalysis. Active-site residues include His-181 and Glu-183. The GMPS ATP-PPase domain maps to 208–400 (WTASNIVEDA…LGLPYDMVYR (193 aa)). 235–241 (SGGVDSS) lines the ATP pocket.

As to quaternary structure, homodimer.

The catalysed reaction is XMP + L-glutamine + ATP + H2O = GMP + L-glutamate + AMP + diphosphate + 2 H(+). Its pathway is purine metabolism; GMP biosynthesis; GMP from XMP (L-Gln route): step 1/1. Catalyzes the synthesis of GMP from XMP. The sequence is that of GMP synthase [glutamine-hydrolyzing] from Pseudomonas putida (strain GB-1).